A 350-amino-acid chain; its full sequence is Phosphoribosylformylglycinamidine cyclo-ligase (350 aa).

It belongs to the AIR synthase family.

The protein localises to the cytoplasm. It catalyses the reaction 2-formamido-N(1)-(5-O-phospho-beta-D-ribosyl)acetamidine + ATP = 5-amino-1-(5-phospho-beta-D-ribosyl)imidazole + ADP + phosphate + H(+). The protein operates within purine metabolism; IMP biosynthesis via de novo pathway; 5-amino-1-(5-phospho-D-ribosyl)imidazole from N(2)-formyl-N(1)-(5-phospho-D-ribosyl)glycinamide: step 2/2. This Nitratidesulfovibrio vulgaris (strain DSM 19637 / Miyazaki F) (Desulfovibrio vulgaris) protein is Phosphoribosylformylglycinamidine cyclo-ligase.